Here is a 433-residue protein sequence, read N- to C-terminus: Enolase (433 aa).

Gln-167 is a (2R)-2-phosphoglycerate binding site. The active-site Proton donor is the Glu-209. 3 residues coordinate Mg(2+): Asp-246, Glu-291, and Asp-318. Positions 343, 372, 373, and 394 each coordinate (2R)-2-phosphoglycerate. Catalysis depends on Lys-343, which acts as the Proton acceptor.

This sequence belongs to the enolase family. Component of the RNA degradosome, a multiprotein complex involved in RNA processing and mRNA degradation. Requires Mg(2+) as cofactor.

The protein resides in the cytoplasm. Its subcellular location is the secreted. It is found in the cell surface. It catalyses the reaction (2R)-2-phosphoglycerate = phosphoenolpyruvate + H2O. Its pathway is carbohydrate degradation; glycolysis; pyruvate from D-glyceraldehyde 3-phosphate: step 4/5. In terms of biological role, catalyzes the reversible conversion of 2-phosphoglycerate (2-PG) into phosphoenolpyruvate (PEP). It is essential for the degradation of carbohydrates via glycolysis. This Histophilus somni (strain 129Pt) (Haemophilus somnus) protein is Enolase.